The chain runs to 313 residues: Porphobilinogen deaminase (313 aa).

Cys-242 carries the post-translational modification S-(dipyrrolylmethanemethyl)cysteine.

It belongs to the HMBS family. As to quaternary structure, monomer. Requires dipyrromethane as cofactor.

The enzyme catalyses 4 porphobilinogen + H2O = hydroxymethylbilane + 4 NH4(+). It functions in the pathway porphyrin-containing compound metabolism; protoporphyrin-IX biosynthesis; coproporphyrinogen-III from 5-aminolevulinate: step 2/4. Tetrapolymerization of the monopyrrole PBG into the hydroxymethylbilane pre-uroporphyrinogen in several discrete steps. In Escherichia coli O7:K1 (strain IAI39 / ExPEC), this protein is Porphobilinogen deaminase.